The sequence spans 237 residues: Pyridoxine 5'-phosphate synthase (237 aa).

Residues Asn-7 and Arg-18 each contribute to the 3-amino-2-oxopropyl phosphate site. His-43 functions as the Proton acceptor in the catalytic mechanism. Arg-45 and His-50 together coordinate 1-deoxy-D-xylulose 5-phosphate. Glu-70 (proton acceptor) is an active-site residue. A 1-deoxy-D-xylulose 5-phosphate-binding site is contributed by Thr-100. The active-site Proton donor is the His-190. Residues Asp-191 and 213–214 (GH) each bind 3-amino-2-oxopropyl phosphate.

Belongs to the PNP synthase family. In terms of assembly, homooctamer; tetramer of dimers.

Its subcellular location is the cytoplasm. It carries out the reaction 3-amino-2-oxopropyl phosphate + 1-deoxy-D-xylulose 5-phosphate = pyridoxine 5'-phosphate + phosphate + 2 H2O + H(+). The protein operates within cofactor biosynthesis; pyridoxine 5'-phosphate biosynthesis; pyridoxine 5'-phosphate from D-erythrose 4-phosphate: step 5/5. Functionally, catalyzes the complicated ring closure reaction between the two acyclic compounds 1-deoxy-D-xylulose-5-phosphate (DXP) and 3-amino-2-oxopropyl phosphate (1-amino-acetone-3-phosphate or AAP) to form pyridoxine 5'-phosphate (PNP) and inorganic phosphate. The polypeptide is Pyridoxine 5'-phosphate synthase (Bacteroides fragilis (strain ATCC 25285 / DSM 2151 / CCUG 4856 / JCM 11019 / LMG 10263 / NCTC 9343 / Onslow / VPI 2553 / EN-2)).